The sequence spans 109 residues: Spermidine export protein MdtI (109 aa).

4 consecutive transmembrane segments (helical) span residues 6-26, 36-56, 64-84, and 88-108; these read WIHG…NVLL, CYGI…SQAV, AYAL…WVLF, and LNPK…MIKF.

Belongs to the drug/metabolite transporter (DMT) superfamily. Small multidrug resistance (SMR) (TC 2.A.7.1) family. MdtI subfamily. Forms a complex with MdtJ.

The protein localises to the cell inner membrane. In terms of biological role, catalyzes the excretion of spermidine. This is Spermidine export protein MdtI from Salmonella paratyphi A (strain ATCC 9150 / SARB42).